Consider the following 301-residue polypeptide: Glycosyltransferase GlyG (301 aa).

The protein belongs to the glycosyltransferase 2 family.

Its pathway is protein modification; protein glycosylation. In terms of biological role, involved in the polymorphic O-glycosylation of the serine-rich repeat protein PsrP. Catalyzes the third step in glycosylation PsrP in this bacteria. Transfers glucose from UDP-glucose to the terminal glucose moiety of already-glycosylated PsrP (using truncated substrates with PsrP SSR1-GlcNAc-Glc). Has a marked preference for PsrP substrate that has already been modified by GlcNAc and glucose. In vitro has hydrolytic activity against UDP-glucose and to a lesser extent against UDP-galactose. Its function is as follows. Also catalyzes the fourth step in glycosylation of the serine-rich repeat protein PsrP in this bacteria. Can transfer the sugar from UDP-glucose (and much less well from UDP-galactose) to the terminal sugar moiety of PsrP-GlcNAc-Glc-Gal or of PsrP-GlcNAc-Glc-Glc. The polypeptide is Glycosyltransferase GlyG (Streptococcus pneumoniae serotype 4 (strain ATCC BAA-334 / TIGR4)).